The primary structure comprises 123 residues: Ribonuclease P protein component (123 aa).

Belongs to the RnpA family. Consists of a catalytic RNA component (M1 or rnpB) and a protein subunit.

It catalyses the reaction Endonucleolytic cleavage of RNA, removing 5'-extranucleotides from tRNA precursor.. Its function is as follows. RNaseP catalyzes the removal of the 5'-leader sequence from pre-tRNA to produce the mature 5'-terminus. It can also cleave other RNA substrates such as 4.5S RNA. The protein component plays an auxiliary but essential role in vivo by binding to the 5'-leader sequence and broadening the substrate specificity of the ribozyme. The protein is Ribonuclease P protein component of Streptococcus pneumoniae (strain JJA).